A 210-amino-acid polypeptide reads, in one-letter code: Na(+)-translocating NADH-quinone reductase subunit D (210 aa).

6 helical membrane passes run 11–31, 42–62, 70–90, 103–123, 131–151, and 178–198; these read ILAP…VCSA, FVMT…VSLI, VRII…DQIL, VFVG…AFAM, FIDG…VGFF, and NGLM…IWAI.

It belongs to the NqrDE/RnfAE family. In terms of assembly, composed of six subunits; NqrA, NqrB, NqrC, NqrD, NqrE and NqrF.

The protein localises to the cell inner membrane. The enzyme catalyses a ubiquinone + n Na(+)(in) + NADH + H(+) = a ubiquinol + n Na(+)(out) + NAD(+). NQR complex catalyzes the reduction of ubiquinone-1 to ubiquinol by two successive reactions, coupled with the transport of Na(+) ions from the cytoplasm to the periplasm. NqrA to NqrE are probably involved in the second step, the conversion of ubisemiquinone to ubiquinol. This Vibrio anguillarum (Listonella anguillarum) protein is Na(+)-translocating NADH-quinone reductase subunit D.